A 546-amino-acid polypeptide reads, in one-letter code: Chaperonin GroEL (546 aa).

Residues 30-33 (TLGP), lysine 51, 87-91 (DGTTT), glycine 415, and aspartate 496 each bind ATP. Residues 526 to 546 (PQKDAPAGGGMPDMGGMGGMM) are disordered. Positions 532–546 (AGGGMPDMGGMGGMM) are enriched in gly residues.

This sequence belongs to the chaperonin (HSP60) family. In terms of assembly, forms a cylinder of 14 subunits composed of two heptameric rings stacked back-to-back. Interacts with the co-chaperonin GroES.

Its subcellular location is the cytoplasm. The enzyme catalyses ATP + H2O + a folded polypeptide = ADP + phosphate + an unfolded polypeptide.. In terms of biological role, together with its co-chaperonin GroES, plays an essential role in assisting protein folding. The GroEL-GroES system forms a nano-cage that allows encapsulation of the non-native substrate proteins and provides a physical environment optimized to promote and accelerate protein folding. The polypeptide is Chaperonin GroEL (Ruegeria pomeroyi (strain ATCC 700808 / DSM 15171 / DSS-3) (Silicibacter pomeroyi)).